A 590-amino-acid polypeptide reads, in one-letter code: Aspartate--tRNA(Asp/Asn) ligase (590 aa).

Glu-175 lines the L-aspartate pocket. The aspartate stretch occupies residues 199–202 (QQYK). L-aspartate-binding residues include Arg-221 and His-450. Residue 221–223 (RDE) coordinates ATP. Glu-484 lines the ATP pocket. Arg-491 is an L-aspartate binding site. 536-539 (GVDR) contacts ATP.

The protein belongs to the class-II aminoacyl-tRNA synthetase family. Type 1 subfamily. As to quaternary structure, homodimer.

Its subcellular location is the cytoplasm. The enzyme catalyses tRNA(Asx) + L-aspartate + ATP = L-aspartyl-tRNA(Asx) + AMP + diphosphate. In terms of biological role, aspartyl-tRNA synthetase with relaxed tRNA specificity since it is able to aspartylate not only its cognate tRNA(Asp) but also tRNA(Asn). Reaction proceeds in two steps: L-aspartate is first activated by ATP to form Asp-AMP and then transferred to the acceptor end of tRNA(Asp/Asn). This Nitrobacter winogradskyi (strain ATCC 25391 / DSM 10237 / CIP 104748 / NCIMB 11846 / Nb-255) protein is Aspartate--tRNA(Asp/Asn) ligase.